Reading from the N-terminus, the 139-residue chain is Protein AC53 (139 aa).

Its subcellular location is the host cytoplasm. The protein resides in the host nucleus. In terms of biological role, plays a role in nucleocapsid assembly. This Lepidoptera (butterflies and moths) protein is Protein AC53 (AC53).